A 649-amino-acid polypeptide reads, in one-letter code: Acetyl-coenzyme A synthetase (649 aa).

CoA-binding positions include 190-193 (RGGR) and Thr310. Residues 386–388 (GEP), 410–415 (DTWWQT), Asp499, and Arg514 contribute to the ATP site. Residue Ser522 coordinates CoA. Arg525 is a binding site for ATP. Mg(2+) is bound by residues Val536, His538, and Val541. CoA is bound at residue Arg583. Lys608 carries the post-translational modification N6-acetyllysine.

Belongs to the ATP-dependent AMP-binding enzyme family. The cofactor is Mg(2+). Post-translationally, acetylated. Deacetylation by the SIR2-homolog deacetylase activates the enzyme.

It carries out the reaction acetate + ATP + CoA = acetyl-CoA + AMP + diphosphate. Catalyzes the conversion of acetate into acetyl-CoA (AcCoA), an essential intermediate at the junction of anabolic and catabolic pathways. AcsA undergoes a two-step reaction. In the first half reaction, AcsA combines acetate with ATP to form acetyl-adenylate (AcAMP) intermediate. In the second half reaction, it can then transfer the acetyl group from AcAMP to the sulfhydryl group of CoA, forming the product AcCoA. This is Acetyl-coenzyme A synthetase from Methylorubrum extorquens (strain PA1) (Methylobacterium extorquens).